The chain runs to 70 residues: Alpha-toxin Bot9 (70 aa).

In terms of domain architecture, LCN-type CS-alpha/beta spans 6 to 69 (RDGYIVYPNN…PIKDPSYKCY (64 aa)). Cystine bridges form between Cys16–Cys68, Cys20–Cys40, Cys26–Cys50, and Cys30–Cys52.

The protein belongs to the long (4 C-C) scorpion toxin superfamily. Sodium channel inhibitor family. Alpha subfamily. As to expression, expressed by the venom gland.

It localises to the secreted. Functionally, alpha toxins bind voltage-independently at site-3 of sodium channels (Nav) and inhibit the inactivation of the activated channels, thereby blocking neuronal transmission. This toxin is active against rat Nav1.2/SCN2A and B.germanica Nav1. This is Alpha-toxin Bot9 from Buthus occitanus tunetanus (Common European scorpion).